A 414-amino-acid chain; its full sequence is Lipoyl synthase, mitochondrial (414 aa).

The transit peptide at 1–18 directs the protein to the mitochondrion; that stretch reads MYRRSVGVLFVGRNTRWI. Positions 51-67 are enriched in polar residues; it reads GNSTEVENATSQLTGTS. The disordered stretch occupies residues 51–75; sequence GNSTEVENATSQLTGTSGKRRKGNR. [4Fe-4S] cluster contacts are provided by C150, C155, C161, C181, C185, C188, and S396. The 222-residue stretch at 164–385 folds into the Radical SAM core domain; that stretch reads GKDKSKATAT…KERALEMGFL (222 aa).

This sequence belongs to the radical SAM superfamily. Lipoyl synthase family. [4Fe-4S] cluster is required as a cofactor.

It localises to the mitochondrion. It carries out the reaction [[Fe-S] cluster scaffold protein carrying a second [4Fe-4S](2+) cluster] + N(6)-octanoyl-L-lysyl-[protein] + 2 oxidized [2Fe-2S]-[ferredoxin] + 2 S-adenosyl-L-methionine + 4 H(+) = [[Fe-S] cluster scaffold protein] + N(6)-[(R)-dihydrolipoyl]-L-lysyl-[protein] + 4 Fe(3+) + 2 hydrogen sulfide + 2 5'-deoxyadenosine + 2 L-methionine + 2 reduced [2Fe-2S]-[ferredoxin]. It participates in protein modification; protein lipoylation via endogenous pathway; protein N(6)-(lipoyl)lysine from octanoyl-[acyl-carrier-protein]: step 2/2. Catalyzes the radical-mediated insertion of two sulfur atoms into the C-6 and C-8 positions of the octanoyl moiety bound to the lipoyl domains of lipoate-dependent enzymes, thereby converting the octanoylated domains into lipoylated derivatives. This Saccharomyces cerevisiae (strain RM11-1a) (Baker's yeast) protein is Lipoyl synthase, mitochondrial.